The following is a 451-amino-acid chain: UDP-N-acetylmuramate--L-alanine ligase (451 aa).

G110 to T116 contributes to the ATP binding site.

This sequence belongs to the MurCDEF family.

It is found in the cytoplasm. It catalyses the reaction UDP-N-acetyl-alpha-D-muramate + L-alanine + ATP = UDP-N-acetyl-alpha-D-muramoyl-L-alanine + ADP + phosphate + H(+). It functions in the pathway cell wall biogenesis; peptidoglycan biosynthesis. In terms of biological role, cell wall formation. This Francisella tularensis subsp. novicida (strain U112) protein is UDP-N-acetylmuramate--L-alanine ligase.